We begin with the raw amino-acid sequence, 94 residues long: Small ribosomal subunit protein uS17 (94 aa).

Residues 1-22 (MASSSTEGQAAARGRKKSWTGK) form a disordered region.

This sequence belongs to the universal ribosomal protein uS17 family. As to quaternary structure, part of the 30S ribosomal subunit.

One of the primary rRNA binding proteins, it binds specifically to the 5'-end of 16S ribosomal RNA. This Chlorobium luteolum (strain DSM 273 / BCRC 81028 / 2530) (Pelodictyon luteolum) protein is Small ribosomal subunit protein uS17.